We begin with the raw amino-acid sequence, 325 residues long: Lipoyl synthase (325 aa).

[4Fe-4S] cluster contacts are provided by cysteine 72, cysteine 77, cysteine 83, cysteine 98, cysteine 102, cysteine 105, and serine 312. The Radical SAM core domain maps to phenylalanine 84–lysine 301.

It belongs to the radical SAM superfamily. Lipoyl synthase family. [4Fe-4S] cluster serves as cofactor.

The protein resides in the cytoplasm. It catalyses the reaction [[Fe-S] cluster scaffold protein carrying a second [4Fe-4S](2+) cluster] + N(6)-octanoyl-L-lysyl-[protein] + 2 oxidized [2Fe-2S]-[ferredoxin] + 2 S-adenosyl-L-methionine + 4 H(+) = [[Fe-S] cluster scaffold protein] + N(6)-[(R)-dihydrolipoyl]-L-lysyl-[protein] + 4 Fe(3+) + 2 hydrogen sulfide + 2 5'-deoxyadenosine + 2 L-methionine + 2 reduced [2Fe-2S]-[ferredoxin]. The protein operates within protein modification; protein lipoylation via endogenous pathway; protein N(6)-(lipoyl)lysine from octanoyl-[acyl-carrier-protein]: step 2/2. In terms of biological role, catalyzes the radical-mediated insertion of two sulfur atoms into the C-6 and C-8 positions of the octanoyl moiety bound to the lipoyl domains of lipoate-dependent enzymes, thereby converting the octanoylated domains into lipoylated derivatives. In Stutzerimonas stutzeri (strain A1501) (Pseudomonas stutzeri), this protein is Lipoyl synthase.